A 128-amino-acid polypeptide reads, in one-letter code: Large ribosomal subunit protein bL20c (128 aa).

It belongs to the bacterial ribosomal protein bL20 family.

It is found in the plastid. The protein localises to the chloroplast. In terms of biological role, binds directly to 23S ribosomal RNA and is necessary for the in vitro assembly process of the 50S ribosomal subunit. It is not involved in the protein synthesizing functions of that subunit. This Trachelium caeruleum (Blue throatwort) protein is Large ribosomal subunit protein bL20c.